A 129-amino-acid polypeptide reads, in one-letter code: MADKELKFLVVDDFSTMRRIVRNLLKELGFNNVEEAEDGLDALNKLQAGGYGFVISDWNMPNMDGLELLKTIRADGAMSALPVLMVTAEAKKENIIAAAQAGASGYVVKPFTAATLEEKLNKIFEKLGM.

Positions lysine 7–phenylalanine 124 constitute a Response regulatory domain. Aspartate 12, aspartate 13, aspartate 57, and asparagine 59 together coordinate Mg(2+). Aspartate 57 bears the 4-aspartylphosphate mark. Residues lysine 92 and lysine 109 each carry the N6-acetyllysine modification.

It depends on Mg(2+) as a cofactor. Post-translationally, phosphorylated by CheA or acetylated by acetyl-CoA synthetase, depending on which acetate metabolism pathway is available.

The protein localises to the cytoplasm. Involved in the transmission of sensory signals from the chemoreceptors to the flagellar motors. In its active (phosphorylated or acetylated) form, CheY exhibits enhanced binding to a switch component, FliM, at the flagellar motor which induces a change from counterclockwise to clockwise flagellar rotation. This is Chemotaxis protein CheY (cheY) from Escherichia coli O6:H1 (strain CFT073 / ATCC 700928 / UPEC).